Consider the following 172-residue polypeptide: Trypsin inhibitor 1B (172 aa).

Intrachain disulfides connect C40–C84 and C133–C139.

This sequence belongs to the protease inhibitor I3 (leguminous Kunitz-type inhibitor) family.

In terms of biological role, WTI-1B inhibits trypsin stoichiometrically. In Psophocarpus tetragonolobus (Winged bean), this protein is Trypsin inhibitor 1B.